We begin with the raw amino-acid sequence, 382 residues long: Lipid-A-disaccharide synthase (382 aa).

The protein belongs to the LpxB family.

The enzyme catalyses 2-N,3-O-bis[(3R)-3-hydroxytetradecanoyl]-alpha-D-glucosaminyl 1-phosphate + UDP-2-N,3-O-bis[(3R)-3-hydroxytetradecanoyl]-alpha-D-glucosamine = lipid A disaccharide (E. coli) + UDP + H(+). It catalyses the reaction a lipid X + a UDP-2-N,3-O-bis[(3R)-3-hydroxyacyl]-alpha-D-glucosamine = a lipid A disaccharide + UDP + H(+). The protein operates within glycolipid biosynthesis; lipid IV(A) biosynthesis; lipid IV(A) from (3R)-3-hydroxytetradecanoyl-[acyl-carrier-protein] and UDP-N-acetyl-alpha-D-glucosamine: step 5/6. In terms of biological role, condensation of UDP-2,3-diacylglucosamine and 2,3-diacylglucosamine-1-phosphate to form lipid A disaccharide, a precursor of lipid A, a phosphorylated glycolipid that anchors the lipopolysaccharide to the outer membrane of the cell. The polypeptide is Lipid-A-disaccharide synthase (Salmonella typhimurium (strain LT2 / SGSC1412 / ATCC 700720)).